The primary structure comprises 451 residues: Chromosomal replication initiator protein DnaA (451 aa).

Residues 1-71 (MSEQEIWKKV…QTIMKDVIGY (71 aa)) form a domain I, interacts with DnaA modulators region. The tract at residues 71-112 (YEVEPKFFTAEQLAELDETSRKSNTPSEPQRQIIEYGHEGTD) is domain II. The tract at residues 113-329 (QFNTHNTFDT…GALTRLLAYS (217 aa)) is domain III, AAA+ region. The ATP site is built by Gly-157, Gly-159, Lys-160, and Thr-161. The domain IV, binds dsDNA stretch occupies residues 330–451 (KLQGRPITTE…EDLEKEIRNQ (122 aa)).

It belongs to the DnaA family. In terms of assembly, oligomerizes as a right-handed, spiral filament on DNA at oriC.

Its subcellular location is the cytoplasm. Plays an essential role in the initiation and regulation of chromosomal replication. ATP-DnaA binds to the origin of replication (oriC) to initiate formation of the DNA replication initiation complex once per cell cycle. Binds the DnaA box (a 9 base pair repeat at the origin) and separates the double-stranded (ds)DNA. Forms a right-handed helical filament on oriC DNA; dsDNA binds to the exterior of the filament while single-stranded (ss)DNA is stabiized in the filament's interior. The ATP-DnaA-oriC complex binds and stabilizes one strand of the AT-rich DNA unwinding element (DUE), permitting loading of DNA polymerase. After initiation quickly degrades to an ADP-DnaA complex that is not apt for DNA replication. Binds acidic phospholipids. The sequence is that of Chromosomal replication initiator protein DnaA from Staphylococcus haemolyticus (strain JCSC1435).